The chain runs to 149 residues: Large-conductance mechanosensitive channel (149 aa).

2 consecutive transmembrane segments (helical) span residues Phe8–Thr28 and Ile74–Ile94.

It belongs to the MscL family. In terms of assembly, homopentamer.

The protein localises to the cell membrane. Functionally, channel that opens in response to stretch forces in the membrane lipid bilayer. May participate in the regulation of osmotic pressure changes within the cell. The polypeptide is Large-conductance mechanosensitive channel (Enterococcus faecalis (strain ATCC 700802 / V583)).